The chain runs to 508 residues: Glycerol kinase (508 aa).

Position 14 (T14) interacts with ADP. ATP is bound by residues T14, T15, and S16. T14 contacts sn-glycerol 3-phosphate. R18 contributes to the ADP binding site. Sn-glycerol 3-phosphate-binding residues include R84, E85, and Y136. Glycerol contacts are provided by R84, E85, and Y136. At H232 the chain carries Phosphohistidine; by HPr. D246 serves as a coordination point for sn-glycerol 3-phosphate. 2 residues coordinate glycerol: D246 and Q247. Residues T268 and G311 each coordinate ADP. 4 residues coordinate ATP: T268, G311, Q315, and G412. ADP-binding residues include G412 and N416.

The protein belongs to the FGGY kinase family. Homotetramer and homodimer (in equilibrium). The phosphoenolpyruvate-dependent sugar phosphotransferase system (PTS), including enzyme I, and histidine-containing protein (HPr) are required for the phosphorylation, which leads to the activation of the enzyme.

The enzyme catalyses glycerol + ATP = sn-glycerol 3-phosphate + ADP + H(+). Its pathway is polyol metabolism; glycerol degradation via glycerol kinase pathway; sn-glycerol 3-phosphate from glycerol: step 1/1. Activated by phosphorylation and inhibited by fructose 1,6-bisphosphate (FBP). In terms of biological role, key enzyme in the regulation of glycerol uptake and metabolism. Catalyzes the phosphorylation of glycerol to yield sn-glycerol 3-phosphate. This chain is Glycerol kinase, found in Streptococcus pyogenes serotype M18 (strain MGAS8232).